Consider the following 215-residue polypeptide: tRNA (guanine-N(7)-)-methyltransferase (215 aa).

Positions 44, 69, 96, and 118 each coordinate S-adenosyl-L-methionine. Asp-118 is an active-site residue. Substrate contacts are provided by residues Lys-122, Asp-154, and 191-194 (TEYE).

This sequence belongs to the class I-like SAM-binding methyltransferase superfamily. TrmB family.

The enzyme catalyses guanosine(46) in tRNA + S-adenosyl-L-methionine = N(7)-methylguanosine(46) in tRNA + S-adenosyl-L-homocysteine. It functions in the pathway tRNA modification; N(7)-methylguanine-tRNA biosynthesis. Its function is as follows. Catalyzes the formation of N(7)-methylguanine at position 46 (m7G46) in tRNA. The polypeptide is tRNA (guanine-N(7)-)-methyltransferase (Exiguobacterium sp. (strain ATCC BAA-1283 / AT1b)).